Consider the following 282-residue polypeptide: Ribosome biogenesis GTPase A (282 aa).

The CP-type G domain maps to 14–178 (RREVTEKLKL…LLDTPGILWP (165 aa)). GTP-binding positions include 58–61 (NKAD), 86–87 (NS), 130–135 (NVGKST), and Gly174.

The protein belongs to the TRAFAC class YlqF/YawG GTPase family. MTG1 subfamily. Interacts with ctc. Interacts with the immature 50S ribosome subunit. 2 molecules of rbgA bind to one 50S subunit.

It localises to the cytoplasm. Functionally, essential protein that is required for a late step of 50S ribosomal subunit assembly. Has GTPase activity that is stimulated by interaction with the immature 50S ribosome subunit. Binds to the 23S rRNA. Required for the association of ribosomal proteins rplP and rpmA with the large subunit. This Bacillus spizizenii (strain ATCC 23059 / NRRL B-14472 / W23) (Bacillus subtilis subsp. spizizenii) protein is Ribosome biogenesis GTPase A (rbgA).